The chain runs to 438 residues: Glutamate-1-semialdehyde 2,1-aminomutase (438 aa).

Lys-278 bears the N6-(pyridoxal phosphate)lysine mark.

The protein belongs to the class-III pyridoxal-phosphate-dependent aminotransferase family. HemL subfamily. Homodimer. It depends on pyridoxal 5'-phosphate as a cofactor.

It localises to the cytoplasm. It carries out the reaction (S)-4-amino-5-oxopentanoate = 5-aminolevulinate. It participates in porphyrin-containing compound metabolism; protoporphyrin-IX biosynthesis; 5-aminolevulinate from L-glutamyl-tRNA(Glu): step 2/2. This is Glutamate-1-semialdehyde 2,1-aminomutase from Delftia acidovorans (strain DSM 14801 / SPH-1).